An 806-amino-acid polypeptide reads, in one-letter code: Leucine--tRNA ligase (806 aa).

Positions proline 40 to histidine 51 match the 'HIGH' region motif. The 'KMSKS' region motif lies at lysine 578–serine 582. Lysine 581 is an ATP binding site.

The protein belongs to the class-I aminoacyl-tRNA synthetase family.

The protein resides in the cytoplasm. It carries out the reaction tRNA(Leu) + L-leucine + ATP = L-leucyl-tRNA(Leu) + AMP + diphosphate. This is Leucine--tRNA ligase from Limosilactobacillus reuteri (strain DSM 20016) (Lactobacillus reuteri).